Here is a 397-residue protein sequence, read N- to C-terminus: Phosphoglycerate kinase (397 aa).

Substrate contacts are provided by residues 21–23 (DFN), Arg-37, 60–63 (HLGR), Arg-119, and Arg-152. ATP contacts are provided by residues Lys-203, Gly-294, Glu-325, and 354–357 (GGDS).

The protein belongs to the phosphoglycerate kinase family. As to quaternary structure, monomer.

The protein localises to the cytoplasm. It carries out the reaction (2R)-3-phosphoglycerate + ATP = (2R)-3-phospho-glyceroyl phosphate + ADP. Its pathway is carbohydrate degradation; glycolysis; pyruvate from D-glyceraldehyde 3-phosphate: step 2/5. The protein is Phosphoglycerate kinase of Chlorobium phaeobacteroides (strain DSM 266 / SMG 266 / 2430).